We begin with the raw amino-acid sequence, 872 residues long: Paramyosin (872 aa).

Residues 1-31 (MSLYRSPSAALLKSPSQAAFGAPFGSMSVAD) form a nonhelical region region. Residues 32-851 (LGSLTRLEDK…ESSLHLIRAK (820 aa)) adopt a coiled-coil conformation. An interaction with unc-89 region spans residues 294–376 (EITQWKSKFD…ALLERAREQL (83 aa)). Residues 856–866 (VVTGKSSSKIF) are nonhelical region.

It belongs to the paramyosin family. In terms of assembly, homodimer. May interact with unc-89 (via SH3 domain). Phosphorylated on serine residues in the N-terminal non-helical region. In terms of tissue distribution, expressed in body wall muscles of larvae and adults (at protein level). Expressed in gonadal myoepithelial sheath cells (at protein level).

Its subcellular location is the cytoplasm. It localises to the myofibril. It is found in the sarcomere. The protein localises to the a band. In terms of biological role, structural component of the muscle thick filaments which is involved in assembly and organization of sarcomere myofilaments. Involved in ovulation. Plays a role in the formation of muscle connections, also called muscle arm extensions, between the body wall and the motor axons in the dorsal and ventral cord. This chain is Paramyosin (unc-15), found in Caenorhabditis elegans.